Here is a 148-residue protein sequence, read N- to C-terminus: Deoxyuridine 5'-triphosphate nucleotidohydrolase (148 aa).

Substrate-binding positions include 68–70 (RSG), asparagine 81, 85–87 (TID), and lysine 95.

The protein belongs to the dUTPase family. Mg(2+) serves as cofactor.

The enzyme catalyses dUTP + H2O = dUMP + diphosphate + H(+). It participates in pyrimidine metabolism; dUMP biosynthesis; dUMP from dCTP (dUTP route): step 2/2. Its function is as follows. This enzyme is involved in nucleotide metabolism: it produces dUMP, the immediate precursor of thymidine nucleotides and it decreases the intracellular concentration of dUTP so that uracil cannot be incorporated into DNA. The sequence is that of Deoxyuridine 5'-triphosphate nucleotidohydrolase from Rickettsia rickettsii (strain Iowa).